The following is a 205-amino-acid chain: MSKRESSKYKIDRRMGENIWGRPKSPVNRREYGPGQHGQRRKGKLSDFGVQLRAKQKLKGYYGDLREKQFRAIFAEAARRKGDTSENLIGLLESRLDAIVYRAKFVPTVFAARQFVNHGHVTVNGVRVNIGSYRCKAGDVIEVREKSKQLVTVLEAVSLAERDVPDYIEVDHNKMVATFGRVPTLSDVPFPVVMEPHLVVEFYSR.

The segment covering 1–16 has biased composition (basic and acidic residues); the sequence is MSKRESSKYKIDRRMG. Residues 1-46 form a disordered region; it reads MSKRESSKYKIDRRMGENIWGRPKSPVNRREYGPGQHGQRRKGKLS. The S4 RNA-binding domain occupies 94–157; sequence SRLDAIVYRA…KQLVTVLEAV (64 aa).

The protein belongs to the universal ribosomal protein uS4 family. Part of the 30S ribosomal subunit. Contacts protein S5. The interaction surface between S4 and S5 is involved in control of translational fidelity.

In terms of biological role, one of the primary rRNA binding proteins, it binds directly to 16S rRNA where it nucleates assembly of the body of the 30S subunit. Its function is as follows. With S5 and S12 plays an important role in translational accuracy. The protein is Small ribosomal subunit protein uS4 of Rhizobium etli (strain ATCC 51251 / DSM 11541 / JCM 21823 / NBRC 15573 / CFN 42).